The primary structure comprises 218 residues: Elongation factor Ts (218 aa).

An involved in Mg(2+) ion dislocation from EF-Tu region spans residues 82–85 (TDFV).

Belongs to the EF-Ts family.

Its subcellular location is the cytoplasm. Its function is as follows. Associates with the EF-Tu.GDP complex and induces the exchange of GDP to GTP. It remains bound to the aminoacyl-tRNA.EF-Tu.GTP complex up to the GTP hydrolysis stage on the ribosome. This chain is Elongation factor Ts, found in Prochlorococcus marinus (strain MIT 9215).